Reading from the N-terminus, the 361-residue chain is Phospho-N-acetylmuramoyl-pentapeptide-transferase (361 aa).

The next 10 helical transmembrane spans lie at 28–48 (LSMF…IKFF), 70–90 (IGTP…GILL), 94–114 (LSNY…LLGA), 129–149 (VSFK…IYGL), 169–189 (LIIN…VGSS), 205–225 (PVIL…NIVF), 237–257 (MGEV…FLWF), 264–284 (IFMG…IGII), 289–309 (IVLA…IIQV), and 338–358 (TVVI…LATL).

It belongs to the glycosyltransferase 4 family. MraY subfamily. Requires Mg(2+) as cofactor.

It localises to the cell inner membrane. The catalysed reaction is UDP-N-acetyl-alpha-D-muramoyl-L-alanyl-gamma-D-glutamyl-meso-2,6-diaminopimeloyl-D-alanyl-D-alanine + di-trans,octa-cis-undecaprenyl phosphate = di-trans,octa-cis-undecaprenyl diphospho-N-acetyl-alpha-D-muramoyl-L-alanyl-D-glutamyl-meso-2,6-diaminopimeloyl-D-alanyl-D-alanine + UMP. The protein operates within cell wall biogenesis; peptidoglycan biosynthesis. Its function is as follows. Catalyzes the initial step of the lipid cycle reactions in the biosynthesis of the cell wall peptidoglycan: transfers peptidoglycan precursor phospho-MurNAc-pentapeptide from UDP-MurNAc-pentapeptide onto the lipid carrier undecaprenyl phosphate, yielding undecaprenyl-pyrophosphoryl-MurNAc-pentapeptide, known as lipid I. The sequence is that of Phospho-N-acetylmuramoyl-pentapeptide-transferase from Pelagibacter ubique (strain HTCC1062).